The chain runs to 437 residues: MGKRLDQPQMYPQYTYYYPHYLQTKQSYAPAPHPMAPPSPSTNSSSNNSSNNSSGEQLSKTNLYIRGLPPGTTDQDLIKLCQPYGKIVSTKAILDKNTNQCKGYGFVDFDSPAAAQKAVASLKANGVQAQMAKQQEQDPTNLYISNLPISMDEQELENMLKPFGHVISTRILRDANGVSRGVGFARMESTEKCEVVIQHFNGKYLKTPPGIPAPSEPLLCKFADGGQKKRQNQSKYTQNGRPWPREGEAGMALTYDPTAAIQNGFYSSPYSIATNRMIPQTSITPFIAASPVSTYQVQSTSWMPHPPYVMQPTGAVITPTMDHPMSMQPANMMGPLTQQMNHLSLGTTGTIQSQDRIMILHQLLCQYMTAAAPMQGTYIPQYTPVPPTAVSIEGVVADTSPQTVAPSSQDTSGQQQQIAVDTSNEHAPAYSYQQSKP.

A disordered region spans residues Y28–Q57. Over residues A31–P40 the composition is skewed to pro residues. Over residues S41–S54 the composition is skewed to low complexity. RRM domains are found at residues T61–Q134 and T140–G225. The segment covering T399–T422 has biased composition (polar residues). The tract at residues T399 to P437 is disordered.

Expressed in fetal brain, fetal lung, fetal liver, heart, brain, placenta, lung, liver, muscle, kidney and pancreas.

Its subcellular location is the cytoplasm. Binds poly(A) and poly(U) oligoribonucleotides. The polypeptide is RNA-binding motif, single-stranded-interacting protein 3 (RBMS3) (Homo sapiens (Human)).